The following is an 830-amino-acid chain: uncharacterized protein (830 aa).

3 disordered regions span residues 1 to 28, 70 to 147, and 186 to 210; these read MGVQLKLDPNSKNWLRQPDQQPIQDSIC, RRAN…GNFA, and AASPTVSFSPASTSENLTPTSSKSL. Residues 10 to 27 are compositionally biased toward polar residues; that stretch reads NSKNWLRQPDQQPIQDSI. Low complexity-rich tracts occupy residues 100-130 and 186-199; these read QKSSNSRKSIRSQSRSRSSSVGSDSQASIQS and AASPTVSFSPASTS. Residues 200 to 210 are compositionally biased toward polar residues; the sequence is ENLTPTSSKSL. 10 helical membrane passes run 505-525, 529-549, 551-571, 584-604, 622-642, 659-679, 691-711, 715-735, 740-760, and 802-822; these read WLVAFMHGVASASILPVVYGG, DMLIGFVLGLLLGIFRVYINP, FFLFDSLFEVIISIILSFLGR, FCFAALVEGAITLILPGYVVF, MLYAVIFSLFLSFGITIGSAL, IIAVSPYWYILLIPIFTLSLL, IQMFVACCGYVVYYFSSLHFG, ISSAIGSFAVGCLGNMYSHFI, FAVVLPAIFVLVPSGFAAQGG, and IAIGIAIGFLASSLTVYPFFG.

It belongs to the ThrE exporter (TC 2.A.79) family.

It localises to the cell membrane. The protein localises to the cell tip. This is an uncharacterized protein from Schizosaccharomyces pombe (strain 972 / ATCC 24843) (Fission yeast).